The chain runs to 583 residues: Pyruvate kinase isozyme A, chloroplastic (583 aa).

The N-terminal 74 residues, 1–74 (MSQSLHFSPN…NSGVLYNNNN (74 aa)), are a transit peptide targeting the chloroplast. A compositionally biased stretch (low complexity) spans 43–52 (KASTSPSSSS). Positions 43–75 (KASTSPSSSSDPQVLVADNGTGNSGVLYNNNNK) are disordered. Over residues 62–75 (GTGNSGVLYNNNNK) the composition is skewed to polar residues. Arginine 134 serves as a coordination point for substrate. K(+) contacts are provided by asparagine 136, aspartate 168, and threonine 169. 136-139 (NMCH) serves as a coordination point for ATP. Glutamate 333 provides a ligand contact to Mg(2+). Substrate contacts are provided by glycine 356, aspartate 357, and serine 389. Aspartate 357 provides a ligand contact to Mg(2+).

This sequence belongs to the pyruvate kinase family. In terms of assembly, oligomer of alpha and beta subunits. The cofactor is Mg(2+). Requires K(+) as cofactor.

It localises to the plastid. The protein localises to the chloroplast. It catalyses the reaction pyruvate + ATP = phosphoenolpyruvate + ADP + H(+). It functions in the pathway carbohydrate degradation; glycolysis; pyruvate from D-glyceraldehyde 3-phosphate: step 5/5. The polypeptide is Pyruvate kinase isozyme A, chloroplastic (Ricinus communis (Castor bean)).